The primary structure comprises 342 residues: Serine/threonine-protein kinase ISR1 (342 aa).

Positions Trp-59–Phe-342 constitute a Protein kinase domain. Residues Leu-65–Val-73 and Lys-84 contribute to the ATP site. Asp-190 functions as the Proton acceptor in the catalytic mechanism.

It belongs to the protein kinase superfamily. Ser/Thr protein kinase family.

It carries out the reaction L-seryl-[protein] + ATP = O-phospho-L-seryl-[protein] + ADP + H(+). The enzyme catalyses L-threonyl-[protein] + ATP = O-phospho-L-threonyl-[protein] + ADP + H(+). Functionally, probable serine/threonine protein kinase which may function redundantly with MPK1-independent branch of the PCK1 pathway. This is Serine/threonine-protein kinase ISR1 (ISR1) from Eremothecium gossypii (strain ATCC 10895 / CBS 109.51 / FGSC 9923 / NRRL Y-1056) (Yeast).